The chain runs to 83 residues: Tetracenomycin polyketide synthase acyl carrier protein (83 aa).

Residues 3–83 form the Carrier domain; sequence QIGLPRLVEI…VNTETAGEVA (81 aa). Residue Ser-41 is modified to O-(pantetheine 4'-phosphoryl)serine.

In terms of assembly, the tetracenomycin polyketide synthase (TCM PKS) is composed of a ketosynthase complex (TcmKL), an acyl carrier protein (TcmM), a cyclase (TcmN) and a probable second cyclase (TcmJ). It depends on pantetheine 4'-phosphate as a cofactor. In terms of processing, 4'-phosphopantetheine is transferred from CoA to a specific serine of apo-ACP.

It carries out the reaction 10 malonyl-CoA + 8 H(+) = tetracenomycin F2 + 10 CO2 + 10 CoA + 2 H2O. Its pathway is antibiotic biosynthesis; tetracenomycin C biosynthesis. Its function is as follows. Involved in the biosynthesis of tetracenomycin C (TCM C). Part of a type II polyketide synthase (PKS) that catalyzes the synthesis of tetracenomycin F2 (TCM F2), a precursor of TCM C, from malonyl-CoA. TcmM is an acyl carrier protein that serves as an acceptor of malonate from malonyl-CoA and acts as the tether for the substrates and intermediates of polyketide assembly. The malonyl CoA-acyl carrier protein transacylase FabD (MCT) is required to catalyze the transacylation between malonyl-CoA and TcmM, although a relatively slow spontaneous self-malonylation of TcmM also occurs in a reaction without the MCT. This is Tetracenomycin polyketide synthase acyl carrier protein from Streptomyces glaucescens.